The following is a 74-amino-acid chain: Translational regulator CsrA (74 aa).

It belongs to the CsrA/RsmA family. As to quaternary structure, homodimer. The beta-strands of each monomer intercalate to form a hydrophobic core while the alpha-helices form wings that extend away from the core. Two molecules of FliW interact with 1 homodimer. mRNA and FliW bind to different sites on CsrA.

It localises to the cytoplasm. A translational regulator that binds mRNA to regulate translation initiation and/or mRNA stability. Usually binds in the 5'-UTR at or near the Shine-Dalgarno sequence preventing ribosome-binding, thus repressing translation. Represses expression of flagellin (hag) in a post-transcriptional fashion. Specifically binds to 2 sites in the 5'-UTR of hag mRNA in a cooperative fashion; the second site overlaps the Shine-Dalgarno sequence and prevents 30S ribosomal subunit binding. Mutation of either binding site abolishes CsrA regulation of hag expression. Repression is greater in the 1A96 than 168 genetic background and higher in minimal than rich medium. Translation repression is antagonized by FliW. Partner switching by flagellin between FliW and CsrA provides a flagellar assembly checkpoint to tightly control the timing of flagellin synthesis. Flagellin binds to assembly factor FliW, freeing CsrA to repress translation of the flagellin mRNA. When the flagellar hook is assembled flagellin is secreted, depleting intracellular flagellin, which frees FliW to interact with CsrA and inhibits CsrA binding to mRNA. This derepresses flagellin translation and provides protein for flagellar assembly. Once the flagellar filament is completed cytoplasmic flagellin levels rise and CsrA translation repression of flagellin reinitiates. Overexpression leads to a dramatic reduction in motility, a significant reduction in flagellin synthesis and reduced flagella assembly. In Bacillus subtilis (strain 168), this protein is Translational regulator CsrA.